We begin with the raw amino-acid sequence, 480 residues long: Serine carboxypeptidase-like 35 (480 aa).

The N-terminal stretch at 1–20 (MKKNALWLLCILVLPAIACG) is a signal peptide. N-linked (GlcNAc...) asparagine glycans are attached at residues Asn-79 and Asn-146. 3 disulfide bridges follow: Cys-95–Cys-363, Cys-257–Cys-270, and Cys-294–Cys-331. The active site involves Ser-188. An N-linked (GlcNAc...) asparagine glycan is attached at Asn-265. Asn-352 carries N-linked (GlcNAc...) asparagine glycosylation. Active-site residues include Asp-399 and His-452.

It belongs to the peptidase S10 family. Expressed in seedlings, flowers and siliques.

The protein resides in the secreted. Functionally, probable carboxypeptidase. The polypeptide is Serine carboxypeptidase-like 35 (SCPL35) (Arabidopsis thaliana (Mouse-ear cress)).